Reading from the N-terminus, the 383-residue chain is Ribosomal RNA large subunit methyltransferase G (383 aa).

The protein belongs to the methyltransferase superfamily. RlmG family.

The protein localises to the cytoplasm. The catalysed reaction is guanosine(1835) in 23S rRNA + S-adenosyl-L-methionine = N(2)-methylguanosine(1835) in 23S rRNA + S-adenosyl-L-homocysteine + H(+). Functionally, specifically methylates the guanine in position 1835 (m2G1835) of 23S rRNA. This chain is Ribosomal RNA large subunit methyltransferase G, found in Vibrio atlanticus (strain LGP32) (Vibrio splendidus (strain Mel32)).